The sequence spans 927 residues: DNA mismatch repair protein MutS (927 aa).

ATP is bound at residue 646–653 (GPNMAGKS). The interval 904–927 (SAQPGSAEQGESPDKHDEGKNSRG) is disordered. The span at 915–927 (SPDKHDEGKNSRG) shows a compositional bias: basic and acidic residues.

It belongs to the DNA mismatch repair MutS family.

Its function is as follows. This protein is involved in the repair of mismatches in DNA. It is possible that it carries out the mismatch recognition step. This protein has a weak ATPase activity. This is DNA mismatch repair protein MutS from Desulfovibrio desulfuricans (strain ATCC 27774 / DSM 6949 / MB).